The sequence spans 179 residues: Inosine/xanthosine triphosphatase (179 aa).

A Mg(2+)-binding site is contributed by glutamate 71. 71–72 (EA) contributes to the substrate binding site.

The protein belongs to the YjjX NTPase family. In terms of assembly, homodimer. It depends on Mg(2+) as a cofactor. Mn(2+) is required as a cofactor.

The catalysed reaction is XTP + H2O = XDP + phosphate + H(+). The enzyme catalyses ITP + H2O = IDP + phosphate + H(+). Its function is as follows. Phosphatase that hydrolyzes non-canonical purine nucleotides such as XTP and ITP to their respective diphosphate derivatives. Probably excludes non-canonical purines from DNA/RNA precursor pool, thus preventing their incorporation into DNA/RNA and avoiding chromosomal lesions. This chain is Inosine/xanthosine triphosphatase, found in Shewanella sp. (strain ANA-3).